A 224-amino-acid polypeptide reads, in one-letter code: Fibrillarin-like rRNA/tRNA 2'-O-methyltransferase (224 aa).

S-adenosyl-L-methionine-binding positions include 82–83, 100–101, 125–126, and 145–148; these read TT, EF, DA, and DVAQ.

This sequence belongs to the methyltransferase superfamily. Fibrillarin family. As to quaternary structure, interacts with nop5. Component of box C/D small ribonucleoprotein (sRNP) particles that contain rpl7ae, FlpA and nop5, plus a guide RNA.

Functionally, involved in pre-rRNA and tRNA processing. Utilizes the methyl donor S-adenosyl-L-methionine to catalyze the site-specific 2'-hydroxyl methylation of ribose moieties in rRNA and tRNA. Site specificity is provided by a guide RNA that base pairs with the substrate. Methylation occurs at a characteristic distance from the sequence involved in base pairing with the guide RNA. In Methanothermobacter thermautotrophicus (strain ATCC 29096 / DSM 1053 / JCM 10044 / NBRC 100330 / Delta H) (Methanobacterium thermoautotrophicum), this protein is Fibrillarin-like rRNA/tRNA 2'-O-methyltransferase.